We begin with the raw amino-acid sequence, 91 residues long: uncharacterized protein (91 aa).

This is an uncharacterized protein from Rickettsia conorii (strain ATCC VR-613 / Malish 7).